Consider the following 367-residue polypeptide: MEDVLAEKLSRVCKFDLPFIPCSIPFECHPDFTRISKDTDAWALRMLSITDPYERKKALQGRHSLYSPMIIPRGESSKAELSSKHTWTMFVLDDIAENFSEQEGKKAIDILLEVAEGSYVLSEKEKEKHPSHAMFEEVMSSFRSLMDPPLFARYMNCLRNYLDSVVEEASLRIAKSIPSLEKYRLLRRETSFMEADGGIMCEFCMDLKLHKSVVESPDFVAFVKAVIDHVVLVNDLLSFRHELKIKCFHNYLCVIFCHSPDNTSFQETVDKVCEMIQEAEAEILQLQQKLIKLGEETGDKDLVEYATWYPCVASGNLRWSYVTGRYHGLDNPLLNGEPFQGTWFLHPEATLILPLGSKCGNHPFITI.

Mg(2+) contacts are provided by Asp93, Asn234, and Ser238. The short motif at 93-97 (DDIAE) is the DDXXE motif element.

It belongs to the terpene synthase family. Mg(2+) is required as a cofactor. Requires Mn(2+) as cofactor.

It catalyses the reaction (2E,6E)-farnesyl diphosphate = (E)-2-epi-beta-caryophyllene + diphosphate. The protein operates within secondary metabolite biosynthesis; terpenoid biosynthesis. Functionally, sesquiterpene synthase converting farnesyl diphosphate to (E)-2-epi-beta-caryophyllene as the major product, and to two other unidentified sesquiterpenes. Has no diterpene synthase activity. The chain is (E)-2-epi-beta-caryophyllene synthase from Selaginella moellendorffii (Spikemoss).